A 291-amino-acid chain; its full sequence is ATP synthase gamma chain (291 aa).

This sequence belongs to the ATPase gamma chain family. F-type ATPases have 2 components, CF(1) - the catalytic core - and CF(0) - the membrane proton channel. CF(1) has five subunits: alpha(3), beta(3), gamma(1), delta(1), epsilon(1). CF(0) has three main subunits: a, b and c.

The protein resides in the cell inner membrane. In terms of biological role, produces ATP from ADP in the presence of a proton gradient across the membrane. The gamma chain is believed to be important in regulating ATPase activity and the flow of protons through the CF(0) complex. In Sinorhizobium medicae (strain WSM419) (Ensifer medicae), this protein is ATP synthase gamma chain.